We begin with the raw amino-acid sequence, 199 residues long: Recombination protein RecR (199 aa).

Residues 58-73 (CSICNNITDVDPCTYC) form a C4-type zinc finger. Residues 81–176 (QVICVVEEPT…RVTRIATGVP (96 aa)) enclose the Toprim domain.

Belongs to the RecR family.

In terms of biological role, may play a role in DNA repair. It seems to be involved in an RecBC-independent recombinational process of DNA repair. It may act with RecF and RecO. This is Recombination protein RecR from Koribacter versatilis (strain Ellin345).